We begin with the raw amino-acid sequence, 69 residues long: Large ribosomal subunit protein bL28 (69 aa).

This sequence belongs to the bacterial ribosomal protein bL28 family.

This Lawsonia intracellularis (strain PHE/MN1-00) protein is Large ribosomal subunit protein bL28.